We begin with the raw amino-acid sequence, 149 residues long: Transcriptional repressor NrdR (149 aa).

A zinc finger lies at 3 to 34 (CPFCSATDTKVIDSRLVAEGHQVRRRRECTEC). The ATP-cone domain maps to 49-139 (PRVIKRDGTR…VYRAFEDVSE (91 aa)).

Belongs to the NrdR family. Requires Zn(2+) as cofactor.

Its function is as follows. Negatively regulates transcription of bacterial ribonucleotide reductase nrd genes and operons by binding to NrdR-boxes. This chain is Transcriptional repressor NrdR, found in Shewanella sp. (strain MR-4).